Reading from the N-terminus, the 158-residue chain is ABA-responsive protein ABR18 (158 aa).

This sequence belongs to the BetVI family.

The protein is ABA-responsive protein ABR18 of Pisum sativum (Garden pea).